The primary structure comprises 630 residues: Arginine--tRNA ligase (630 aa).

Positions 120–130 match the 'HIGH' region motif; that stretch reads ANPIHPLHIGH.

Belongs to the class-I aminoacyl-tRNA synthetase family.

The protein localises to the cytoplasm. The catalysed reaction is tRNA(Arg) + L-arginine + ATP = L-arginyl-tRNA(Arg) + AMP + diphosphate. The polypeptide is Arginine--tRNA ligase (Pyrobaculum arsenaticum (strain DSM 13514 / JCM 11321 / PZ6)).